We begin with the raw amino-acid sequence, 437 residues long: Epsilon-sarcoglycan (437 aa).

The Extracellular segment spans residues 1–317 (MLLFWWWELG…LKSRDYYTDF (317 aa)). N-linked (GlcNAc...) asparagine glycosylation occurs at Asn-200. A helical membrane pass occupies residues 318–338 (LVTLAVPSAVALVLFLILAYI). The Cytoplasmic segment spans residues 339–437 (MCCRREGVEK…QPQTTGKWYP (99 aa)).

This sequence belongs to the sarcoglycan alpha/epsilon family. Post-translationally, N-glycosylated. In terms of processing, ubiquitinated, leading to its degradation by the proteasome. Identified in all tissues tested. Expression highest in lung and placenta, moderate in brain, heart and skeletal muscle, low in kidney and liver. Also detected in embryo.

It localises to the cell membrane. The protein resides in the sarcolemma. Its subcellular location is the golgi apparatus. It is found in the cell projection. The protein localises to the dendrite. It localises to the cytoplasm. The protein resides in the cytoskeleton. Its function is as follows. Component of the sarcoglycan complex, a subcomplex of the dystrophin-glycoprotein complex which forms a link between the F-actin cytoskeleton and the extracellular matrix. The chain is Epsilon-sarcoglycan (Sgce) from Mus musculus (Mouse).